Here is a 474-residue protein sequence, read N- to C-terminus: MEFETVIGLEIHAQLKTNTKIFCACSTQYGAAPNSHTCPICLGMPGVLPVLNKKVVEYSIKMGLATGSRINQWNQFARKNYFYPDLPKGYQTSQFDLPIVEGGHIEIEVDGVSKVIGITRMHMEEDAGKLVHDDVEPVSHVDLNRTGTPLLEIVSEPDMRSPQEAYAYLKKVHAILRYLDICDGNMQEGSFRCDANISLRPMGQEKLGTRTELKNMNSFKNVQAALEYEVRRQRDLLLEGEKVIQQTLLWDPDKNRTEAMRGKEDAHDYRYFPCPDLVPIEISDEWIEEIRASLPELPEQCKARFIVDYALSEDDAVQLTSERDLALFFEEVVAAGAHPKKSANWIMTELLRELGGESIVDCRVQASQLSALLLMVDQGMISGKIAKTVFAEMMAEGTDPQLIVKEKNLLQVSDEGELLAIVDEIVAANVQQAEDFRAGKTKLMGFFVGQLMKKTKGKANPGLANELFNKALNK.

Belongs to the GatB/GatE family. GatB subfamily. Heterotrimer of A, B and C subunits.

It catalyses the reaction L-glutamyl-tRNA(Gln) + L-glutamine + ATP + H2O = L-glutaminyl-tRNA(Gln) + L-glutamate + ADP + phosphate + H(+). The catalysed reaction is L-aspartyl-tRNA(Asn) + L-glutamine + ATP + H2O = L-asparaginyl-tRNA(Asn) + L-glutamate + ADP + phosphate + 2 H(+). Functionally, allows the formation of correctly charged Asn-tRNA(Asn) or Gln-tRNA(Gln) through the transamidation of misacylated Asp-tRNA(Asn) or Glu-tRNA(Gln) in organisms which lack either or both of asparaginyl-tRNA or glutaminyl-tRNA synthetases. The reaction takes place in the presence of glutamine and ATP through an activated phospho-Asp-tRNA(Asn) or phospho-Glu-tRNA(Gln). This is Aspartyl/glutamyl-tRNA(Asn/Gln) amidotransferase subunit B from Desulfotalea psychrophila (strain LSv54 / DSM 12343).